A 223-amino-acid polypeptide reads, in one-letter code: Alpha-S2-casein (223 aa).

Residues 1 to 15 (MKLFIFTCLLAVALA) form the signal peptide. Residues serine 23, serine 24, serine 25, serine 28, serine 46, serine 71, serine 72, and serine 73 each carry the phosphoserine modification. 2 consecutive repeats follow at residues 76–128 (FADI…TLGK) and 129–223 (EQIS…ERQA). Phosphoserine is present on residues serine 132, serine 147, and serine 155.

The protein belongs to the alpha-casein family. Mammary gland specific. Secreted in milk.

It localises to the secreted. Its function is as follows. Important role in the capacity of milk to transport calcium phosphate. The polypeptide is Alpha-S2-casein (CSN1S2) (Cavia porcellus (Guinea pig)).